A 193-amino-acid chain; its full sequence is Cyanate hydratase (193 aa).

Residues Arg121, Glu124, and Ser147 contribute to the active site.

Belongs to the cyanase family.

It catalyses the reaction cyanate + hydrogencarbonate + 3 H(+) = NH4(+) + 2 CO2. Functionally, catalyzes the reaction of cyanate with bicarbonate to produce ammonia and carbon dioxide. In Phaeodactylum tricornutum (strain CCAP 1055/1), this protein is Cyanate hydratase.